The primary structure comprises 483 residues: Peroxisomal biogenesis factor 3 (483 aa).

Topologically, residues 1-14 (MTGNRSLVQRHRKK) are peroxisomal. Residues 15–35 (FVVSSVLFATLFATCAITVYF) traverse the membrane as a helical segment. Over 36–483 (SKRWLYKQHL…SACVYSNFGL (448 aa)) the chain is Cytoplasmic. 2 disordered regions span residues 119–149 (GLSSGMSAMTPAPSVSAKSPQSADTTSVSET) and 230–253 (NNLPSEKADPRNSDGTIDTDTRSI). Over residues 242–253 (SDGTIDTDTRSI) the composition is skewed to polar residues.

Belongs to the peroxin-3 family.

It localises to the peroxisome membrane. Functionally, involved in peroxisome biosynthesis. This Kluyveromyces lactis (strain ATCC 8585 / CBS 2359 / DSM 70799 / NBRC 1267 / NRRL Y-1140 / WM37) (Yeast) protein is Peroxisomal biogenesis factor 3 (PEX3).